We begin with the raw amino-acid sequence, 316 residues long: uncharacterized protein (316 aa).

An S4 RNA-binding domain is found at 26–98 (ERIDRFLAGA…IPLDVVYEDA (73 aa)). Asp148 is an active-site residue.

This sequence belongs to the pseudouridine synthase RluA family.

The catalysed reaction is a uridine in RNA = a pseudouridine in RNA. This is an uncharacterized protein from Chloroflexus aurantiacus (strain ATCC 29366 / DSM 635 / J-10-fl).